A 541-amino-acid chain; its full sequence is 2-hydroxyacylsphingosine 1-beta-galactosyltransferase (541 aa).

The first 20 residues, 1 to 20 (MKSYTPYFILLWSAVGIAKA), serve as a signal peptide directing secretion. N-linked (GlcNAc...) asparagine glycans are attached at residues N78, N333, and N442. The chain crosses the membrane as a helical span at residues 472-492 (YFLLDIAFVLLLGAALLYFLL).

This sequence belongs to the UDP-glycosyltransferase family.

It is found in the membrane. The protein resides in the endoplasmic reticulum. The enzyme catalyses an N-acylsphing-4-enine + UDP-alpha-D-galactose = a beta-D-galactosyl-(1&lt;-&gt;1')-N-acylsphing-4-enine + UDP + H(+). It carries out the reaction an N-acyl-sphingoid base + UDP-alpha-D-galactose = a D-galactosylceramide + UDP + H(+). It catalyses the reaction N-(2-hydroxy-hexanoyl)-sphing-4-enine + UDP-alpha-D-galactose = N-(2-hydroxy-hexanoyl)-beta-D-galactosyl-sphing-4-enine + UDP + H(+). The catalysed reaction is N-(2-hydroxy-hexanoyl)-sphinganine + UDP-alpha-D-galactose = N-(2-hydroxyhexanoyl)-beta-D-galactosylsphinganine + UDP + H(+). The protein operates within sphingolipid metabolism; galactosylceramide biosynthesis. Catalyzes the transfer of galactose to ceramide, a key enzymatic step in the biosynthesis of galactocerebrosides, which are abundant sphingolipids of the myelin membrane of the central nervous system and peripheral nervous system. Galactosylates both hydroxy- and non-hydroxy fatty acid-containing ceramides and diglycerides. This Homo sapiens (Human) protein is 2-hydroxyacylsphingosine 1-beta-galactosyltransferase.